Consider the following 427-residue polypeptide: Ribitol transporter (427 aa).

The Cytoplasmic segment spans residues 1–7 (MSVNNKQ). A helical transmembrane segment spans residues 8–28 (WYGLPLNLIWGYVAIAVFMTG). Topologically, residues 29–51 (DGFELAFLSHYIKALGFTPAQAS) are extracellular. The helical transmembrane segment at 52 to 72 (FAFTLYGLAAALSAWVSGVVA) threads the bilayer. Over 73 to 79 (EIITPRK) the chain is Cytoplasmic. Residues 80–100 (AMLIGFVLWCVFHVLFLVFGL) traverse the membrane as a helical segment. The Extracellular portion of the chain corresponds to 101-107 (GRANYAL). The helical transmembrane segment at 108 to 128 (ILLFYGIRGLAYPLFLYSFIV) threads the bilayer. The Cytoplasmic segment spans residues 129 to 141 (AIIHNVRSDSSSS). Residues 142 to 162 (ALGWFWAVYSVGIGVFGSYIP) traverse the membrane as a helical segment. Over 163–171 (SFTIPHIGE) the chain is Extracellular. Residues 172–192 (MGTLWLALLFCATGGIIALVS) form a helical membrane-spanning segment. Residues 193–238 (MRHTETPRHMQNLTTREKFAELGRAATLLYTNRSILFSSIVRIINT) lie on the Cytoplasmic side of the membrane. The helical transmembrane segment at 239–259 (LSLFGFAVIMPMMFVDELGFT) threads the bilayer. Topologically, residues 260–263 (TSEW) are extracellular. A helical transmembrane segment spans residues 264–284 (LQVWAAFFFTTIFSNVFWGIV). Residues 285-295 (AEKMGWMKVIR) are Cytoplasmic-facing. A helical transmembrane segment spans residues 296–316 (WFGCIGMALSSLAFYYLPQHF). Residues 317-323 (GHNFAMA) lie on the Extracellular side of the membrane. Residues 324–344 (LVPAIALGIFVAAFVPMAAVF) traverse the membrane as a helical segment. Topologically, residues 345–360 (PALEPNHKGAAISVYN) are cytoplasmic. The helical transmembrane segment at 361–381 (LSAGLSNFLAPAIAVVLLPYF) threads the bilayer. At 382–383 (ST) the chain is on the extracellular side. Residues 384–404 (IGVVIAYTALYILAFFLCPLI) form a helical membrane-spanning segment. Residues 405–427 (RVEQPGFTSDQHAKPFTANAAES) are Cytoplasmic-facing.

This sequence belongs to the major facilitator superfamily. Sugar transporter (TC 2.A.1.1) family. CsbX subfamily.

The protein localises to the cell membrane. The sequence is that of Ribitol transporter (rbtT) from Klebsiella pneumoniae.